An 88-amino-acid chain; its full sequence is Large ribosomal subunit protein bL27 (88 aa).

The disordered stretch occupies residues 1-23 (MAHKKAGGSSRNGRDSAGRRLGV).

The protein belongs to the bacterial ribosomal protein bL27 family.

The sequence is that of Large ribosomal subunit protein bL27 from Methylorubrum extorquens (strain CM4 / NCIMB 13688) (Methylobacterium extorquens).